Here is a 207-residue protein sequence, read N- to C-terminus: Uracil phosphoribosyltransferase (207 aa).

5-phospho-alpha-D-ribose 1-diphosphate is bound by residues Arg77, Arg102, and 129–137 (DPMLATGGS). Uracil-binding positions include Ile192 and 197–199 (GDA). Asp198 contributes to the 5-phospho-alpha-D-ribose 1-diphosphate binding site.

It belongs to the UPRTase family. Mg(2+) is required as a cofactor.

It carries out the reaction UMP + diphosphate = 5-phospho-alpha-D-ribose 1-diphosphate + uracil. It functions in the pathway pyrimidine metabolism; UMP biosynthesis via salvage pathway; UMP from uracil: step 1/1. Its activity is regulated as follows. Allosterically activated by GTP. Its function is as follows. Catalyzes the conversion of uracil and 5-phospho-alpha-D-ribose 1-diphosphate (PRPP) to UMP and diphosphate. In Ureaplasma parvum serovar 3 (strain ATCC 27815 / 27 / NCTC 11736), this protein is Uracil phosphoribosyltransferase.